A 530-amino-acid polypeptide reads, in one-letter code: Cytochrome P450 monooxygenase ausG (530 aa).

A helical transmembrane segment spans residues 31-51; that stretch reads LLVAYRLPGLLLLFSITIILF. Heme is bound at residue cysteine 470.

It belongs to the cytochrome P450 family. The cofactor is heme.

It localises to the membrane. It participates in secondary metabolite biosynthesis; terpenoid biosynthesis. In terms of biological role, cytochrome P450 monooxygenase; part of the gene cluster B that mediates the biosynthesis of the fungal meroterpenoid acetoxydehydroaustin. The first step of the pathway is the synthesis of 3,5-dimethylorsellinic acid by the polyketide synthase ausA. 3,5-dimethylorsellinic acid is then prenylated by the polyprenyl transferase ausN. Further epoxidation by the FAD-dependent monooxygenase ausM and cyclization by the probable terpene cyclase ausL lead to the formation of protoaustinoid A. Protoaustinoid A is then oxidized to spiro-lactone preaustinoid A3 by the combined action of the FAD-binding monooxygenases ausB and ausC, and the dioxygenase ausE. Acid-catalyzed keto-rearrangement and ring contraction of the tetraketide portion of preaustinoid A3 by ausJ lead to the formation of preaustinoid A4. The aldo-keto reductase ausK, with the help of ausH, is involved in the next step by transforming preaustinoid A4 into isoaustinone which is in turn hydroxylated by the P450 monooxygenase ausI to form austinolide. The cytochrome P450 monooxygenase ausG then modifies austinolide to austinol. Austinol is further acetylated to austin by the O-acetyltransferase ausP, which spontaneously changes to dehydroaustin. The cytochrome P450 monooxygenase then converts dehydroaustin is into 7-dehydrodehydroaustin. The hydroxylation catalyzed by ausR permits the second O-acetyltransferase ausQ to add an additional acetyl group to the molecule, leading to the formation of acetoxydehydroaustin. Due to genetic rearrangements of the clusters and the subsequent loss of some enzymes, the end product of the Penicillium brasilianum austinoid biosynthesis clusters is acetoxydehydroaustin. The polypeptide is Cytochrome P450 monooxygenase ausG (Penicillium brasilianum).